A 430-amino-acid chain; its full sequence is Spermatogenic leucine zipper protein 1 (430 aa).

The tract at residues 1-25 is disordered; it reads MASSAKSAEMPTISKTVNPTPDPHQ. The stretch at 62 to 102 forms a coiled coil; it reads EQQTAQKFNNLLKEIKDILKNMAGFEEKITEAKELFEETNI. Ser107 carries the post-translational modification Phosphoserine. A helix-loop-helix motif region spans residues 166-177; that stretch reads KINEMLSTNLPV. Residues 178 to 244 are basic motif; sequence SLAPEKEDNE…NVQEETMKIR (67 aa). Coiled-coil stretches lie at residues 214 to 269 and 316 to 351; these read LEEK…KLIK and SLQL…TLQE. Ser258 is subject to Phosphoserine. The leucine-zipper stretch occupies residues 303–324; that stretch reads LEEQVKKLSHDTYSLQLMAALL.

As to quaternary structure, interacts with PPP1CC isoform gamma-2. Post-translationally, phosphorylated by MAPK1/ERK2 and MAPK3/ERK1. In terms of tissue distribution, specifically and strongly expressed in the testis. Expressed in several tumor cell lines.

It is found in the cytoplasm. Its subcellular location is the nucleus. Its function is as follows. Transcription factor that binds to the DNA sequence 5'-CANNTG-3'(E box) and the G-box motif. May play an important role in the regulation of cell proliferation and differentiation during spermatogenesis. This Homo sapiens (Human) protein is Spermatogenic leucine zipper protein 1 (SPZ1).